Reading from the N-terminus, the 422-residue chain is Phagosome assembly factor 1 (422 aa).

The protein belongs to the PHAF1 family. Interacts with BCAS3; the interaction is requrired for the association with the phagophore.

Its subcellular location is the cytoplasm. It localises to the preautophagosomal structure. Functionally, plays a regulatory role in autophagic activity. In complex with BCAS3, associates with the autophagosome formation site during both non-selective and selective autophagy. The protein is Phagosome assembly factor 1 of Mus musculus (Mouse).